The chain runs to 259 residues: UPF0246 protein PP_1289 (259 aa).

The protein belongs to the UPF0246 family.

The chain is UPF0246 protein PP_1289 from Pseudomonas putida (strain ATCC 47054 / DSM 6125 / CFBP 8728 / NCIMB 11950 / KT2440).